A 717-amino-acid polypeptide reads, in one-letter code: Glutamine--fructose-6-phosphate aminotransferase [isomerizing] (717 aa).

The For GATase activity role is filled by cysteine 2. Residues cysteine 2–glycine 318 form the Glutamine amidotransferase type-2 domain. At serine 253 the chain carries Phosphoserine. Threonine 334 is modified (phosphothreonine). Serine 336 bears the Phosphoserine mark. 2 SIS domains span residues tryptophan 390 to serine 529 and cysteine 562 to proline 707.

It carries out the reaction D-fructose 6-phosphate + L-glutamine = D-glucosamine 6-phosphate + L-glutamate. Its pathway is nucleotide-sugar biosynthesis; UDP-N-acetyl-alpha-D-glucosamine biosynthesis; alpha-D-glucosamine 6-phosphate from D-fructose 6-phosphate: step 1/1. Involved in amino sugar synthesis (formation of chitin, supplies the amino sugars of asparagine-linked oligosaccharides of glycoproteins). The polypeptide is Glutamine--fructose-6-phosphate aminotransferase [isomerizing] (GFA1) (Saccharomyces cerevisiae (strain ATCC 204508 / S288c) (Baker's yeast)).